The sequence spans 177 residues: Large ribosomal subunit protein uL6 (177 aa).

Belongs to the universal ribosomal protein uL6 family. As to quaternary structure, part of the 50S ribosomal subunit.

In terms of biological role, this protein binds to the 23S rRNA, and is important in its secondary structure. It is located near the subunit interface in the base of the L7/L12 stalk, and near the tRNA binding site of the peptidyltransferase center. This chain is Large ribosomal subunit protein uL6, found in Aromatoleum aromaticum (strain DSM 19018 / LMG 30748 / EbN1) (Azoarcus sp. (strain EbN1)).